The primary structure comprises 97 residues: UPF0235 protein Aasi_0294 (97 aa).

It belongs to the UPF0235 family.

The sequence is that of UPF0235 protein Aasi_0294 from Amoebophilus asiaticus (strain 5a2).